A 427-amino-acid polypeptide reads, in one-letter code: Dihydroorotase (427 aa).

The Zn(2+) site is built by H60 and H62. Residues 62–64 (HLR) and N94 each bind substrate. Positions 152, 179, and 232 each coordinate Zn(2+). N278 is a substrate binding site. D305 lines the Zn(2+) pocket. The active site involves D305. Substrate contacts are provided by residues H309 and 323 to 324 (FG).

Belongs to the metallo-dependent hydrolases superfamily. DHOase family. Class I DHOase subfamily. Zn(2+) serves as cofactor.

It carries out the reaction (S)-dihydroorotate + H2O = N-carbamoyl-L-aspartate + H(+). It participates in pyrimidine metabolism; UMP biosynthesis via de novo pathway; (S)-dihydroorotate from bicarbonate: step 3/3. Functionally, catalyzes the reversible cyclization of carbamoyl aspartate to dihydroorotate. This is Dihydroorotase from Geobacillus sp. (strain WCH70).